Here is a 459-residue protein sequence, read N- to C-terminus: MNRLPSSASALACSAHALNLIEKRTLDHEEMKALNREVIEYFKEHVNPGFLEYRKSVTAGGDYGAVEWQAGSLNTLVDTQGQEFIDCLGGFGIFNVGHRNPVVVSAVQNQLAKQPLHSQELLDPLRAMLAKTLAALTPGKLKYSFFCNSGTESVEAALKLAKAYQSPRGKFTFIATSGAFHGKSLGALSATAKSTFRKPFMPLLPGFRHVPFGNIEAMRTALNECKKTGDDVAAVILEPIQGEGGVILPPPGYLTAVRKLCDEFGALMILDEVQTGMGRTGKMFACEHENVQPDILCLAKALGGGVMPIGATIATEEVFSVLFDNPFLHTTTFGGNPLTCAAALATINVLLEQNLPAQAEQKGDMLLDGFRQLAREYPDLVQEARGKGMLMAIEFVDNEIGYNFASEMFRQRVLVAGTLNNAKTIRIEPPLTLTIEQCELVIKAARKALAAMRVSVEEA.

Pyridoxal 5'-phosphate-binding positions include 150–151 (GT) and Gln274. Residue Lys300 is modified to N6-(pyridoxal phosphate)lysine. Position 332 (Thr332) interacts with pyridoxal 5'-phosphate.

This sequence belongs to the class-III pyridoxal-phosphate-dependent aminotransferase family. Putrescine aminotransferase subfamily. Pyridoxal 5'-phosphate serves as cofactor.

It catalyses the reaction an alkane-alpha,omega-diamine + 2-oxoglutarate = an omega-aminoaldehyde + L-glutamate. The enzyme catalyses putrescine + 2-oxoglutarate = 1-pyrroline + L-glutamate + H2O. It carries out the reaction cadaverine + 2-oxoglutarate = 5-aminopentanal + L-glutamate. Its pathway is amine and polyamine degradation; putrescine degradation; 4-aminobutanal from putrescine (transaminase route): step 1/1. In terms of biological role, catalyzes the aminotransferase reaction from putrescine to 2-oxoglutarate, leading to glutamate and 4-aminobutanal, which spontaneously cyclizes to form 1-pyrroline. This is the first step in one of two pathways for putrescine degradation, where putrescine is converted into 4-aminobutanoate (gamma-aminobutyrate or GABA) via 4-aminobutanal. Also functions as a cadaverine transaminase in a a L-lysine degradation pathway to succinate that proceeds via cadaverine, glutarate and L-2-hydroxyglutarate. The polypeptide is Putrescine aminotransferase (Escherichia coli O7:K1 (strain IAI39 / ExPEC)).